A 461-amino-acid polypeptide reads, in one-letter code: Putative aldehyde dehydrogenase FUS7 (461 aa).

Residue 220-225 (GSTTTG) participates in NAD(+) binding. Active-site residues include Glu-242 and Cys-276.

It belongs to the aldehyde dehydrogenase family.

The enzyme catalyses an aldehyde + NAD(+) + H2O = a carboxylate + NADH + 2 H(+). Its function is as follows. Putative aldehyde dehydrogenase; part of the gene cluster that mediates the biosynthesis of the mycotoxin fusarin C. Within the cluster, FUS1, FUS2, FUS8 and FUS9 are sufficient for fusarin production. The other FUS cluster members are not essential for fusarin C biosynthesis. This is Putative aldehyde dehydrogenase FUS7 from Gibberella fujikuroi (strain CBS 195.34 / IMI 58289 / NRRL A-6831) (Bakanae and foot rot disease fungus).